The primary structure comprises 28 residues: Putative antitoxin AF_1079 (28 aa).

It belongs to the UPF0165 family.

Functionally, possibly the antitoxin component of a type II toxin-antitoxin (TA) system. The chain is Putative antitoxin AF_1079 from Archaeoglobus fulgidus (strain ATCC 49558 / DSM 4304 / JCM 9628 / NBRC 100126 / VC-16).